We begin with the raw amino-acid sequence, 930 residues long: MAALDSDSDEDLISYGTGLEPLDEGERPKKPIPLQDQTVRDEKGRYKRFHGAFSGGFSAGYFNTVGSKEGWTPSTFVSSRQNRADKSALGPEDFMDEEDLSEFGIAPKAIVTTDDFASKTKDRIREKARQLAAAAAPIPGATLLDDLITPAKLSVGFELLRKMGWKEGQGVGPRVKRKARRQKPDPGVKIYGCALPPGGSEESEDEDDDYLPDNVTFAPKDVMPVDFTPKDNVHGLAYKGLDPHQALFGMPGEHLNLFGGASEGTSHLLGDVGLSKGRKLGISGQAFGVGALEEEDDDIYATETLSKYDTVLKDEEPGDGLYGWTAPKQYKNQKEPERDLRYVGKILEGFSLASKPLSSKKIYPPPQLPRDYRPVHYFRPVVAATAENAHVLQVLSESSGKAGQDVGTHSRHQLNASKRGELLGEMPIQGSATSVLEFLSQKDKERIKEVKQATDLKAAQAKARSLAQSASSSRAQASTPDLGHSSWHLALGGGTVTTRANNFKPFAKDPEKQRRYEEFLVHMKKGQKDALERCLDPSMTEWERSREREEFARAAQLYVSSNSTLSSRFTHAKEEEDSDQVEVPRDQENDVSDKQSAVKMKMFGKLTRDTFEWHPDKLLCKRFNVPDPYPGSTLVGLPRVKRDKYSVFNFLTLPEPAPLPTAPVPSEKAPQQRGSDKSRKPSRWDTSKQEKKEDSISEFLSQARSKVGPPKQESSALGSKEEQAPEPRPDTTVDKAVDAQTDGEGSRPSMDLFKAIFASSSDEKSSSSEEEQDDSEDSQEHTEEASLKGSQEAAAGETSVVLAAEPEPCEPATPFPIQKAQIDEREEFGPRLPPVFCPNSRQKLEIPQKEKPKKSKERHKSKKEHRRKREKKKKHKKHKHKSKQKNKKSEKNSSSESTDSSDSGSDDGGPAELSPQELLRRLKCLPLRRQ.

The span at 1–12 (MAALDSDSDEDL) shows a compositional bias: acidic residues. 2 disordered regions span residues 1-41 (MAAL…TVRD) and 170-209 (GVGPRVKRKARRQKPDPGVKIYGCALPPGGSEESEDEDDD). Position 2 is an N-acetylalanine (A2). Phosphoserine is present on residues S6 and S8. The 47-residue stretch at 152–198 (KLSVGFELLRKMGWKEGQGVGPRVKRKARRQKPDPGVKIYGCALPPG) folds into the G-patch domain. K313 is covalently cross-linked (Glycyl lysine isopeptide (Lys-Gly) (interchain with G-Cter in SUMO2)). The residue at position 358 (S358) is a Phosphoserine. Disordered regions lie at residues 400–420 (GKAGQDVGTHSRHQLNASKRG), 465–486 (SLAQSASSSRAQASTPDLGHSS), 566–596 (SSRFTHAKEEEDSDQVEVPRDQENDVSDKQS), and 654–930 (PEPA…LRRQ). Residues 465 to 478 (SLAQSASSSRAQAS) are compositionally biased toward low complexity. Composition is skewed to basic and acidic residues over residues 582–593 (EVPRDQENDVSD) and 674–695 (GSDKSRKPSRWDTSKQEKKEDS). The residue at position 715 (S715) is a Phosphoserine. Basic and acidic residues predominate over residues 719–737 (SKEEQAPEPRPDTTVDKAV). Residues 768 to 777 (SEEEQDDSED) show a composition bias toward acidic residues. Residues 851-886 (KPKKSKERHKSKKEHRRKREKKKKHKKHKHKSKQKN) are compositionally biased toward basic residues. A compositionally biased stretch (low complexity) spans 894 to 903 (SSESTDSSDS). Residues 921–930 (RLKCLPLRRQ) show a composition bias toward basic residues.

The protein belongs to the GPATCH1 family.

This is G patch domain-containing protein 1 (Gpatch1) from Mus musculus (Mouse).